Reading from the N-terminus, the 445-residue chain is Phosphoglucosamine mutase (445 aa).

Residue S102 is the Phosphoserine intermediate of the active site. S102, D241, D243, and D245 together coordinate Mg(2+). S102 carries the phosphoserine modification.

Belongs to the phosphohexose mutase family. Requires Mg(2+) as cofactor. Post-translationally, activated by phosphorylation.

The catalysed reaction is alpha-D-glucosamine 1-phosphate = D-glucosamine 6-phosphate. Catalyzes the conversion of glucosamine-6-phosphate to glucosamine-1-phosphate. This is Phosphoglucosamine mutase from Aliivibrio salmonicida (strain LFI1238) (Vibrio salmonicida (strain LFI1238)).